Consider the following 90-residue polypeptide: Protein PRAC2 (90 aa).

In terms of tissue distribution, highly expressed in prostate and testis. Also detected in placenta, muscle, colon, peripheral blood leukocytes and skin.

The protein localises to the nucleus. The polypeptide is Protein PRAC2 (Homo sapiens (Human)).